The chain runs to 105 residues: Met repressor (105 aa).

This sequence belongs to the MetJ family. In terms of assembly, homodimer.

It is found in the cytoplasm. Its function is as follows. This regulatory protein, when combined with SAM (S-adenosylmethionine) represses the expression of the methionine regulon and of enzymes involved in SAM synthesis. In Erwinia tasmaniensis (strain DSM 17950 / CFBP 7177 / CIP 109463 / NCPPB 4357 / Et1/99), this protein is Met repressor.